The chain runs to 369 residues: Protein disulfide-isomerase erp38 (369 aa).

The signal sequence occupies residues 1 to 18 (MVLLKSLVVASLAAAVAA). Thioredoxin domains lie at 19 to 130 (KSAV…EKTG) and 131 to 251 (VKAR…EKAG). Catalysis depends on nucleophile residues Cys-50, Cys-53, Cys-170, and Cys-173. Intrachain disulfides connect Cys-50/Cys-53 and Cys-170/Cys-173. The Prevents secretion from ER signature appears at 366-369 (KEEL).

This sequence belongs to the protein disulfide isomerase family.

Its subcellular location is the endoplasmic reticulum lumen. It carries out the reaction Catalyzes the rearrangement of -S-S- bonds in proteins.. This is Protein disulfide-isomerase erp38 (erp38) from Neurospora crassa (strain ATCC 24698 / 74-OR23-1A / CBS 708.71 / DSM 1257 / FGSC 987).